We begin with the raw amino-acid sequence, 211 residues long: ATP phosphoribosyltransferase (211 aa).

The protein belongs to the ATP phosphoribosyltransferase family. Short subfamily. In terms of assembly, heteromultimer composed of HisG and HisZ subunits.

Its subcellular location is the cytoplasm. The enzyme catalyses 1-(5-phospho-beta-D-ribosyl)-ATP + diphosphate = 5-phospho-alpha-D-ribose 1-diphosphate + ATP. Its pathway is amino-acid biosynthesis; L-histidine biosynthesis; L-histidine from 5-phospho-alpha-D-ribose 1-diphosphate: step 1/9. In terms of biological role, catalyzes the condensation of ATP and 5-phosphoribose 1-diphosphate to form N'-(5'-phosphoribosyl)-ATP (PR-ATP). Has a crucial role in the pathway because the rate of histidine biosynthesis seems to be controlled primarily by regulation of HisG enzymatic activity. The sequence is that of ATP phosphoribosyltransferase from Pseudomonas syringae pv. tomato (strain ATCC BAA-871 / DC3000).